A 490-amino-acid chain; its full sequence is ATP synthase subunit beta, chloroplastic (490 aa).

Position 170 to 177 (170 to 177 (GGAGVGKT)) interacts with ATP.

Belongs to the ATPase alpha/beta chains family. F-type ATPases have 2 components, CF(1) - the catalytic core - and CF(0) - the membrane proton channel. CF(1) has five subunits: alpha(3), beta(3), gamma(1), delta(1), epsilon(1). CF(0) has four main subunits: a(1), b(1), b'(1) and c(9-12).

It is found in the plastid. Its subcellular location is the chloroplast thylakoid membrane. It carries out the reaction ATP + H2O + 4 H(+)(in) = ADP + phosphate + 5 H(+)(out). Functionally, produces ATP from ADP in the presence of a proton gradient across the membrane. The catalytic sites are hosted primarily by the beta subunits. In Ipomoea wrightii (Wright's morning glory), this protein is ATP synthase subunit beta, chloroplastic.